Here is a 245-residue protein sequence, read N- to C-terminus: 1-(5-phosphoribosyl)-5-[(5-phosphoribosylamino)methylideneamino] imidazole-4-carboxamide isomerase (245 aa).

The active-site Proton acceptor is Asp8. Asp130 serves as the catalytic Proton donor.

The protein belongs to the HisA/HisF family.

It localises to the cytoplasm. It catalyses the reaction 1-(5-phospho-beta-D-ribosyl)-5-[(5-phospho-beta-D-ribosylamino)methylideneamino]imidazole-4-carboxamide = 5-[(5-phospho-1-deoxy-D-ribulos-1-ylimino)methylamino]-1-(5-phospho-beta-D-ribosyl)imidazole-4-carboxamide. The protein operates within amino-acid biosynthesis; L-histidine biosynthesis; L-histidine from 5-phospho-alpha-D-ribose 1-diphosphate: step 4/9. The polypeptide is 1-(5-phosphoribosyl)-5-[(5-phosphoribosylamino)methylideneamino] imidazole-4-carboxamide isomerase (Marinobacter nauticus (strain ATCC 700491 / DSM 11845 / VT8) (Marinobacter aquaeolei)).